Reading from the N-terminus, the 424-residue chain is Zinc finger protein 597 (424 aa).

Residues 14–88 (ILFEDLAVYF…KYPIAAPLVP (75 aa)) enclose the KRAB domain. C2H2-type zinc fingers lie at residues 156 to 178 (YKCP…QKIH), 184 to 206 (HKCG…RRIH), 212 to 234 (YKCA…MNSH), and 240 to 262 (YTCS…QKSH). A Glycyl lysine isopeptide (Lys-Gly) (interchain with G-Cter in SUMO2) cross-link involves residue Lys-300. 3 consecutive C2H2-type zinc fingers follow at residues 341–363 (LQCP…QNIH), 369–391 (HKCK…QKSH), and 397–419 (FKCT…KRTH).

This sequence belongs to the krueppel C2H2-type zinc-finger protein family.

It is found in the nucleus. Functionally, may be involved in transcriptional regulation. The polypeptide is Zinc finger protein 597 (ZNF597) (Homo sapiens (Human)).